The primary structure comprises 489 residues: Glutamyl-tRNA(Gln) amidotransferase subunit A (489 aa).

Active-site charge relay system residues include lysine 80 and serine 160. Serine 184 (acyl-ester intermediate) is an active-site residue.

Belongs to the amidase family. GatA subfamily. As to quaternary structure, heterotrimer of A, B and C subunits.

The catalysed reaction is L-glutamyl-tRNA(Gln) + L-glutamine + ATP + H2O = L-glutaminyl-tRNA(Gln) + L-glutamate + ADP + phosphate + H(+). Allows the formation of correctly charged Gln-tRNA(Gln) through the transamidation of misacylated Glu-tRNA(Gln) in organisms which lack glutaminyl-tRNA synthetase. The reaction takes place in the presence of glutamine and ATP through an activated gamma-phospho-Glu-tRNA(Gln). The polypeptide is Glutamyl-tRNA(Gln) amidotransferase subunit A (Wolbachia sp. subsp. Drosophila simulans (strain wRi)).